The primary structure comprises 416 residues: Putative serine protease HhoB (416 aa).

Positions 1 to 25 are cleaved as a signal peptide; sequence MAIHLKASHLGVAVLLLLFGGAIGA. The segment covering 35–53 has biased composition (polar residues); sequence GQNHSSPDSPVNTSPQSLT. The disordered stretch occupies residues 35–57; sequence GQNHSSPDSPVNTSPQSLTPAPV. The 79-residue stretch at 320 to 398 folds into the PDZ domain; that stretch reads EMTKQLRTSG…PLAIAVKRGQ (79 aa).

This sequence belongs to the peptidase S1C family.

Functionally, a putative protease, its function overlaps that of the related putative proteases HtrA and HhoA. The sequence is that of Putative serine protease HhoB (hhoB) from Synechocystis sp. (strain ATCC 27184 / PCC 6803 / Kazusa).